Reading from the N-terminus, the 518-residue chain is Retinal dehydrogenase 2 (518 aa).

A Phosphotyrosine modification is found at Y168. Residues 184–186 (IPW), 210–213 (KPAE), and 264–266 (STE) contribute to the NAD(+) site. E286 (proton acceptor) is an active-site residue. C320 functions as the Nucleophile in the catalytic mechanism. S351 bears the Phosphoserine mark. Residues 366 to 370 (KQYNK) and E417 each bind NAD(+).

Belongs to the aldehyde dehydrogenase family. In terms of assembly, homotetramer.

The protein localises to the cytoplasm. The catalysed reaction is retinal + NAD(+) + H2O = retinoate + NADH + 2 H(+). It carries out the reaction all-trans-retinal + NAD(+) + H2O = all-trans-retinoate + NADH + 2 H(+). The enzyme catalyses all-trans-13,14-dihydroretinal + NAD(+) + H2O = all-trans-13,14-dihydroretinoate + NADH + 2 H(+). It participates in cofactor metabolism; retinol metabolism. Functionally, catalyzes the NAD-dependent oxidation of aldehyde substrates, such as all-trans-retinal and all-trans-13,14-dihydroretinal, to their corresponding carboxylic acids, all-trans-retinoate and all-trans-13,14-dihydroretinoate, respectively. Retinoate signaling is critical for the transcriptional control of many genes, for instance it is crucial for initiation of meiosis in both male and female. Recognizes retinal as substrate, both in its free form and when bound to cellular retinol-binding protein. Lacks activity with benzaldehyde, acetaldehyde and octanal. Displays complete lack of activity with citral. The polypeptide is Retinal dehydrogenase 2 (Aldh1a2) (Mus musculus (Mouse)).